The chain runs to 354 residues: 3-isopropylmalate dehydrogenase (354 aa).

76-87 (GPRWDGAKERPE) contacts NAD(+). Residues R94, R104, R130, and D215 each contribute to the substrate site. Residues D215, D239, and D243 each coordinate Mg(2+). 273–285 (GSAPDIAGKNKAN) lines the NAD(+) pocket.

The protein belongs to the isocitrate and isopropylmalate dehydrogenases family. LeuB type 1 subfamily. In terms of assembly, homodimer. Requires Mg(2+) as cofactor. The cofactor is Mn(2+).

The protein resides in the cytoplasm. It carries out the reaction (2R,3S)-3-isopropylmalate + NAD(+) = 4-methyl-2-oxopentanoate + CO2 + NADH. It participates in amino-acid biosynthesis; L-leucine biosynthesis; L-leucine from 3-methyl-2-oxobutanoate: step 3/4. Functionally, catalyzes the oxidation of 3-carboxy-2-hydroxy-4-methylpentanoate (3-isopropylmalate) to 3-carboxy-4-methyl-2-oxopentanoate. The product decarboxylates to 4-methyl-2 oxopentanoate. In Bacillus thuringiensis subsp. konkukian (strain 97-27), this protein is 3-isopropylmalate dehydrogenase.